A 482-amino-acid polypeptide reads, in one-letter code: Probable glycine dehydrogenase (decarboxylating) subunit 2 (482 aa).

An N6-(pyridoxal phosphate)lysine modification is found at Lys-269.

The protein belongs to the GcvP family. C-terminal subunit subfamily. As to quaternary structure, the glycine cleavage system is composed of four proteins: P, T, L and H. In this organism, the P 'protein' is a heterodimer of two subunits. Requires pyridoxal 5'-phosphate as cofactor.

The enzyme catalyses N(6)-[(R)-lipoyl]-L-lysyl-[glycine-cleavage complex H protein] + glycine + H(+) = N(6)-[(R)-S(8)-aminomethyldihydrolipoyl]-L-lysyl-[glycine-cleavage complex H protein] + CO2. The glycine cleavage system catalyzes the degradation of glycine. The P protein binds the alpha-amino group of glycine through its pyridoxal phosphate cofactor; CO(2) is released and the remaining methylamine moiety is then transferred to the lipoamide cofactor of the H protein. The sequence is that of Probable glycine dehydrogenase (decarboxylating) subunit 2 from Pelodictyon phaeoclathratiforme (strain DSM 5477 / BU-1).